The primary structure comprises 102 residues: NADH-quinone oxidoreductase subunit K (102 aa).

3 helical membrane-spanning segments follow: residues Leu-6–Val-26, Ile-30–Val-50, and Val-62–Leu-82.

This sequence belongs to the complex I subunit 4L family. As to quaternary structure, NDH-1 is composed of 13 different subunits. Subunits NuoA, H, J, K, L, M, N constitute the membrane sector of the complex.

Its subcellular location is the cell inner membrane. It carries out the reaction a quinone + NADH + 5 H(+)(in) = a quinol + NAD(+) + 4 H(+)(out). Functionally, NDH-1 shuttles electrons from NADH, via FMN and iron-sulfur (Fe-S) centers, to quinones in the respiratory chain. The immediate electron acceptor for the enzyme in this species is believed to be ubiquinone. Couples the redox reaction to proton translocation (for every two electrons transferred, four hydrogen ions are translocated across the cytoplasmic membrane), and thus conserves the redox energy in a proton gradient. The polypeptide is NADH-quinone oxidoreductase subunit K (Pseudomonas putida (strain ATCC 700007 / DSM 6899 / JCM 31910 / BCRC 17059 / LMG 24140 / F1)).